We begin with the raw amino-acid sequence, 489 residues long: E3 ubiquitin-protein ligase RGLG1 (489 aa).

The span at 1–10 (MGGGNSKEES) shows a compositional bias: basic and acidic residues. Positions 1 to 125 (MGGGNSKEES…SQSQVADRKK (125 aa)) are disordered. Gly2 carries the N-myristoyl glycine lipid modification. Residues 11–23 (SSPSSSSWASHQS) show a composition bias toward low complexity. The segment covering 34–57 (YPPPPTYAPAPSPAPAPAPVPAPS) has biased composition (pro residues). The span at 58-75 (PASSYGPQYSQEGYASQP) shows a compositional bias: low complexity. Positions 76 to 88 (NNPPPPTYAPAPS) are enriched in pro residues. Residues 156–376 (NLIVGIDFTK…KETEFALSAL (221 aa)) form the VWFA domain. The segment at 446–479 (CPICLSNPKNMAFGCGHQTCCECGPDLKVCPICR) adopts an RING-type zinc-finger fold.

In terms of assembly, interacts with the heterodimer UBC35/UEV1B. Interacts with ERF053. Interacts with PP2CA. N-myristoylated. As to expression, ubiquitously expressed.

It localises to the cell membrane. Its subcellular location is the nucleus. It catalyses the reaction S-ubiquitinyl-[E2 ubiquitin-conjugating enzyme]-L-cysteine + [acceptor protein]-L-lysine = [E2 ubiquitin-conjugating enzyme]-L-cysteine + N(6)-ubiquitinyl-[acceptor protein]-L-lysine.. Functionally, E3 ubiquitin-protein ligase that mediates the formation of 'Lys-63'-linked ubiquitin chains. Regulates apical dominance by acting on the auxin transport proteins abundance. Together with RGLG5, mediates the ubiquitination and subsequent proteasomal degradation of the target protein PP2CA. Functions as a positive regulator of abscisic acid (ABA) signaling through ABA-dependent degradation of PP2CA, a major inhibitor of ABA signaling. Acts as a negative regulator of drought stress response. The protein is E3 ubiquitin-protein ligase RGLG1 of Arabidopsis thaliana (Mouse-ear cress).